Here is a 22-residue protein sequence, read N- to C-terminus: KISTGFTPFAGNGFTXITEYGP.

It belongs to the PsbP family.

The protein resides in the plastid. It localises to the chloroplast thylakoid membrane. Its function is as follows. May be involved in the regulation of photosystem II. The protein is Oxygen-evolving enhancer protein 2 of Physcomitrium patens (Spreading-leaved earth moss).